We begin with the raw amino-acid sequence, 393 residues long: S-adenosylmethionine synthase (393 aa).

Histidine 16 is an ATP binding site. Aspartate 18 contributes to the Mg(2+) binding site. Glutamate 44 contributes to the K(+) binding site. L-methionine-binding residues include glutamate 57 and glutamine 100. The interval 100 to 110 is flexible loop; sequence QSNDIAQGVDH. ATP is bound by residues 167–169, 238–239, aspartate 247, 253–254, alanine 270, and lysine 274; these read DAK, RF, and RK. Aspartate 247 lines the L-methionine pocket. An L-methionine-binding site is contributed by lysine 278.

The protein belongs to the AdoMet synthase family. Homotetramer; dimer of dimers. Requires Mg(2+) as cofactor. The cofactor is K(+).

It localises to the cytoplasm. It carries out the reaction L-methionine + ATP + H2O = S-adenosyl-L-methionine + phosphate + diphosphate. The protein operates within amino-acid biosynthesis; S-adenosyl-L-methionine biosynthesis; S-adenosyl-L-methionine from L-methionine: step 1/1. Catalyzes the formation of S-adenosylmethionine (AdoMet) from methionine and ATP. The overall synthetic reaction is composed of two sequential steps, AdoMet formation and the subsequent tripolyphosphate hydrolysis which occurs prior to release of AdoMet from the enzyme. In Acidovorax sp. (strain JS42), this protein is S-adenosylmethionine synthase.